A 96-amino-acid polypeptide reads, in one-letter code: Myticin-B (96 aa).

Positions 1–20 (MKATMLLAVVVAVFVAGTEA) are cleaved as a signal peptide. Residues 61 to 96 (VKFPFGATQDAKSMNELEYTPIMKSMENLDNGMDML) constitute a propeptide, removed in mature form.

Post-translationally, contains four disulfide bonds. Hemocytes.

It is found in the secreted. Functionally, bacteriolytic activity against Gram-positive bacteria M.luteus, B.megaterium and A.viridans and Gram-negative bacteria E.coli D31. Possesses antifungal activity against F.oxysporum. This chain is Myticin-B, found in Mytilus galloprovincialis (Mediterranean mussel).